A 166-amino-acid polypeptide reads, in one-letter code: Ribosome maturation factor RimP (166 aa).

Belongs to the RimP family.

The protein resides in the cytoplasm. Functionally, required for maturation of 30S ribosomal subunits. The polypeptide is Ribosome maturation factor RimP (Paramagnetospirillum magneticum (strain ATCC 700264 / AMB-1) (Magnetospirillum magneticum)).